A 139-amino-acid chain; its full sequence is SPbeta prophage-derived uncharacterized protein YomN (139 aa).

This is SPbeta prophage-derived uncharacterized protein YomN (yomN) from Bacillus subtilis (strain 168).